The following is a 141-amino-acid chain: UPF0310 protein SSA_0254 (141 aa).

Belongs to the UPF0310 family.

This Streptococcus sanguinis (strain SK36) protein is UPF0310 protein SSA_0254.